The chain runs to 24 residues: Humanin (24 aa).

Residues 1–12 are sufficient to interact with BID and BIM and to suppress BID and BIM activity; sequence MAPRGFSCLLLL. The sufficient for neuroprotective activity stretch occupies residues 3–19; it reads PRGFSCLLLLTSEIDLP. Residues 5-12 are sufficient to interact with MPP8; that stretch reads GFSCLLLL. Required for secretion stretches follow at residues 9 to 11 and 19 to 20; these read LLL and PV.

In terms of assembly, homodimer. Interacts with amyloid-beta protein 42 (Abeta42); the interaction prevents Abeta42 fibril formation. Interacts with BAX; forms fibers with BAX which results in BAX conformational changes and sequestering of BAX into the fibers, preventing BAX activation. Interacts with both full-length BID and cleaved BID p15; forms fibers with BID which results in BID conformational changes and sequestering of BID into the fibers, preventing BID activation. Interacts with BIM isoform BimEL but not with BIM isoforms BimL or BimS; the interaction prevents BIM-induced apoptosis. Interacts with IGFBP3; competes with importin KPNB1 for binding to IGFBP3, blocking IGFBP3 nuclear import. Interacts with TRIM11. Interacts with MPP8. In terms of tissue distribution, expressed in testis, seminal plasma and sperm (at protein level). Higher seminal plasma levels are associated with normospermia than with oligospermia, asthenospermia or oligoasthenospermia (at protein level). Higher sperm levels are associated with normospermia than with asthenospermia (at protein level). Expressed in retinal epithelial cells (at protein level). Expressed in the heart, skeletal muscle, kidney and liver. Lesser but significant expression is observed in the brain and the gastrointestinal tract. Expressed in the AD brain, where it is found in some of the large intact neurons of the occipital lobes and small and round reactive glial cells in the hippocampus.

It localises to the secreted. It is found in the cytoplasm. The protein localises to the cell projection. Its subcellular location is the cilium. The protein resides in the flagellum. It localises to the nucleus. It is found in the mitochondrion. Its function is as follows. Plays a role as a neuroprotective factor. Protects against neuronal cell death induced by multiple different familial Alzheimer disease genes and amyloid-beta proteins in Alzheimer disease. Mediates its neuroprotective effect by interacting with a receptor complex composed of IL6ST/GP130, IL27RA/WSX1 and CNTFR. Also acts as a ligand for G-protein coupled receptors FPR2/FPRL1 and FPR3/FPRL2. Inhibits amyloid-beta protein 40 fibril formation. Also inhibits amyloid-beta protein 42 fibril formation. Suppresses apoptosis by binding to BAX and preventing the translocation of BAX from the cytosol to mitochondria. Also suppresses apoptosis by binding to BID and inhibiting the interaction of BID with BAX and BAK which prevents oligomerization of BAX and BAK and suppresses release of apoptogenic proteins from mitochondria. Forms fibers with BAX and also with BID, inducing BAX and BID conformational changes and sequestering them into the fibers which prevents their activation. Can also suppress apoptosis by interacting with BIM isoform BimEL, inhibiting BimEL-induced activation of BAX, blocking oligomerization of BAX and BAK, and preventing release of apoptogenic proteins from mitochondria. Plays a role in up-regulation of anti-apoptotic protein BIRC6/APOLLON, leading to inhibition of neuronal cell death. Binds to IGFBP3 and specifically blocks IGFBP3-induced cell death. Competes with importin KPNB1 for binding to IGFBP3 which is likely to block IGFBP3 nuclear import. Induces chemotaxis of mononuclear phagocytes via FPR2/FPRL1. Reduces aggregation and fibrillary formation by suppressing the effect of APP on mononuclear phagocytes and acts by competitively inhibiting the access of FPR2 to APP. Protects retinal pigment epithelium (RPE) cells against oxidative stress-induced and endoplasmic reticulum (ER) stress-induced apoptosis. Promotes mitochondrial biogenesis in RPE cells following oxidative stress and promotes STAT3 phosphorylation which leads to inhibition of CASP3 release. Also reduces CASP4 levels in RPE cells, suppresses ER stress-induced mitochondrial superoxide production and plays a role in up-regulation of mitochondrial glutathione. Reduces testicular hormone deprivation-induced apoptosis of germ cells at the nonandrogen-sensitive stages of the seminiferous epithelium cycle. Protects endothelial cells against free fatty acid-induced inflammation by suppressing oxidative stress, reducing expression of TXNIP and inhibiting activation of the NLRP3 inflammasome which inhibits expression of pro-inflammatory cytokines IL1B and IL18. Protects against high glucose-induced endothelial cell dysfunction by mediating activation of ERK5 which leads to increased expression of transcription factor KLF2 and prevents monocyte adhesion to endothelial cells. Inhibits the inflammatory response in astrocytes. Increases the expression of PPARGC1A/PGC1A in pancreatic beta cells which promotes mitochondrial biogenesis. Increases insulin sensitivity. In Homo sapiens (Human), this protein is Humanin.